The following is a 197-amino-acid chain: dITP/XTP pyrophosphatase (197 aa).

Substrate is bound at residue 8 to 13 (TGNAGK). Mg(2+) contacts are provided by Glu-40 and Asp-69. The active-site Proton acceptor is Asp-69. Substrate-binding positions include Ser-70, 154-157 (FGYD), Lys-177, and 182-183 (HR).

The protein belongs to the HAM1 NTPase family. In terms of assembly, homodimer. Mg(2+) is required as a cofactor.

The enzyme catalyses XTP + H2O = XMP + diphosphate + H(+). It carries out the reaction dITP + H2O = dIMP + diphosphate + H(+). The catalysed reaction is ITP + H2O = IMP + diphosphate + H(+). Functionally, pyrophosphatase that catalyzes the hydrolysis of nucleoside triphosphates to their monophosphate derivatives, with a high preference for the non-canonical purine nucleotides XTP (xanthosine triphosphate), dITP (deoxyinosine triphosphate) and ITP. Seems to function as a house-cleaning enzyme that removes non-canonical purine nucleotides from the nucleotide pool, thus preventing their incorporation into DNA/RNA and avoiding chromosomal lesions. The chain is dITP/XTP pyrophosphatase (rdgB) from Escherichia coli O157:H7.